The chain runs to 444 residues: Exodeoxyribonuclease 7 large subunit (444 aa).

Belongs to the XseA family. Heterooligomer composed of large and small subunits.

It localises to the cytoplasm. It carries out the reaction Exonucleolytic cleavage in either 5'- to 3'- or 3'- to 5'-direction to yield nucleoside 5'-phosphates.. Functionally, bidirectionally degrades single-stranded DNA into large acid-insoluble oligonucleotides, which are then degraded further into small acid-soluble oligonucleotides. The sequence is that of Exodeoxyribonuclease 7 large subunit from Rickettsia conorii (strain ATCC VR-613 / Malish 7).